Reading from the N-terminus, the 315-residue chain is 31 kDa ribonucleoprotein, chloroplastic (315 aa).

The N-terminal 71 residues, 1–71 (MSCATKPIIK…LSPKKKTSVS (71 aa)), are a transit peptide targeting the chloroplast. Residues 114–133 (AGESDEVEADEEEEEFQEPP) are disordered. Residues 115-133 (GESDEVEADEEEEEFQEPP) are compositionally biased toward acidic residues. RRM domains lie at 136-214 (AKLF…KAAR) and 230-308 (YRIY…VAED).

Its subcellular location is the plastid. The protein resides in the chloroplast. Functionally, could be involved in splicing and/or processing of chloroplast RNA's. The chain is 31 kDa ribonucleoprotein, chloroplastic from Nicotiana sylvestris (Wood tobacco).